A 92-amino-acid polypeptide reads, in one-letter code: Small ribosomal subunit protein uS19 (92 aa).

This sequence belongs to the universal ribosomal protein uS19 family.

Functionally, protein S19 forms a complex with S13 that binds strongly to the 16S ribosomal RNA. The chain is Small ribosomal subunit protein uS19 from Lysinibacillus sphaericus (strain C3-41).